We begin with the raw amino-acid sequence, 98 residues long: Mu-type opioid receptor (98 aa).

At 1–9 (YTKMKTATN) the chain is on the cytoplasmic side. Residues 10-34 (IYIFNLALADALATSTLPFQSVNYL) traverse the membrane as a helical segment. Residues 35–45 (MGTWPFGTILC) lie on the Extracellular side of the membrane. Residues 46–68 (KIVISIDYYNMFTSIFTLCTMSV) form a helical membrane-spanning segment. Residues 69 to 88 (DRYIAVCHPVKALDFRTPRN) are Cytoplasmic-facing. The residue at position 71 (Y71) is a Phosphotyrosine. Residues 89–98 (AKTVNVCNWI) traverse the membrane as a helical segment.

Belongs to the G-protein coupled receptor 1 family. As to quaternary structure, forms homooligomers and heterooligomers with other GPCRs, such as OPRD1, OPRK1, OPRL1, NPFFR2, ADRA2A, SSTR2, CNR1 and CCR5 (probably in dimeric forms). Interacts with heterotrimeric G proteins; interaction with a heterotrimeric complex containing GNAI1, GNB1 and GNG2 stabilizes the active conformation of the receptor and increases its affinity for endomorphin-2, the synthetic opioid peptide DAMGO and for morphinan agonists. Interacts with PPL; the interaction disrupts agonist-mediated G-protein activation. Interacts (via C-terminus) with DNAJB4 (via C-terminus). Interacts with calmodulin; the interaction inhibits the constitutive activity of OPRM1; it abolishes basal and attenuates agonist-stimulated G-protein coupling. Interacts with FLNA, PLD2, RANBP9 and WLS and GPM6A. Interacts with RTP4. Interacts with SYP and GNAS. Interacts with RGS9, RGS17, RGS20, RGS4, PPP1R9B and HINT1. In terms of processing, phosphorylated. Differentially phosphorylated in basal and agonist-induced conditions. Agonist-mediated phosphorylation modulates receptor internalization. Phosphorylated by GRK2 in a agonist-dependent manner. Phosphorylated on tyrosine residues; the phosphorylation is involved in agonist-induced G-protein-independent receptor down-regulation. Post-translationally, phosphorylated. Differentially phosphorylated in basal and agonist-induced conditions. Agonist-mediated phosphorylation modulates receptor internalization. Phosphorylated by GRK2 in a agonist-dependent manner. Phosphorylated on tyrosine residues; the phosphorylation is involved in agonist-induced G-protein-independent receptor down-regulation. Ubiquitinated. A basal ubiquitination seems not to be related to degradation. Ubiquitination is increased upon formation of OPRM1:OPRD1 oligomers leading to proteasomal degradation; the ubiquitination is diminished by RTP4.

The protein localises to the cell membrane. Its subcellular location is the cell projection. It is found in the axon. The protein resides in the perikaryon. It localises to the dendrite. The protein localises to the endosome. Functionally, receptor for endogenous opioids such as beta-endorphin and endomorphin. Receptor for natural and synthetic opioids including morphine, heroin, DAMGO, fentanyl, etorphine, buprenorphin and methadone. Also activated by enkephalin peptides, such as Met-enkephalin or Met-enkephalin-Arg-Phe, with higher affinity for Met-enkephalin-Arg-Phe. Agonist binding to the receptor induces coupling to an inactive GDP-bound heterotrimeric G-protein complex and subsequent exchange of GDP for GTP in the G-protein alpha subunit leading to dissociation of the G-protein complex with the free GTP-bound G-protein alpha and the G-protein beta-gamma dimer activating downstream cellular effectors. The agonist- and cell type-specific activity is predominantly coupled to pertussis toxin-sensitive G(i) and G(o) G alpha proteins, GNAI1, GNAI2, GNAI3 and GNAO1, and to a lesser extent to pertussis toxin-insensitive G alpha proteins GNAZ and GNA15. They mediate an array of downstream cellular responses, including inhibition of adenylate cyclase activity and both N-type and L-type calcium channels, activation of inward rectifying potassium channels, mitogen-activated protein kinase (MAPK), phospholipase C (PLC), phosphoinositide/protein kinase (PKC), phosphoinositide 3-kinase (PI3K) and regulation of NF-kappa-B. Also couples to adenylate cyclase stimulatory G alpha proteins. The selective temporal coupling to G-proteins and subsequent signaling can be regulated by RGSZ proteins, such as RGS9, RGS17 and RGS4. Phosphorylation by members of the GPRK subfamily of Ser/Thr protein kinases and association with beta-arrestins is involved in short-term receptor desensitization. Beta-arrestins associate with the GPRK-phosphorylated receptor and uncouple it from the G-protein thus terminating signal transduction. The phosphorylated receptor is internalized through endocytosis via clathrin-coated pits which involves beta-arrestins. The activation of the ERK pathway occurs either in a G-protein-dependent or a beta-arrestin-dependent manner and is regulated by agonist-specific receptor phosphorylation. Acts as a class A G-protein coupled receptor (GPCR) which dissociates from beta-arrestin at or near the plasma membrane and undergoes rapid recycling. Receptor down-regulation pathways are varying with the agonist and occur dependent or independent of G-protein coupling. Endogenous ligands induce rapid desensitization, endocytosis and recycling. Heterooligomerization with other GPCRs can modulate agonist binding, signaling and trafficking properties. Involved in neurogenesis. The sequence is that of Mu-type opioid receptor (OPRM1) from Cavia porcellus (Guinea pig).